The chain runs to 4749 residues: E3 ubiquitin-protein ligase MYCBP2 (4749 aa).

Disordered regions lie at residues 87 to 127 (DRDQ…RSKS), 170 to 192 (AASKNSVQSGESDSDEEEESREP), and 609 to 628 (ASKGEDGESTKSRRQSKPYK). Residues 100–124 (SRNKKILNKKKLKRKQKSKSKVKTR) show a composition bias toward basic residues. Phosphoserine occurs at positions 127, 178, 181, and 183. RCC1 repeat units lie at residues 600–655 (DGSV…VISK), 699–755 (NGEV…MMCP), 907–957 (KRDK…VLME), 958–1009 (NGDV…LLMD), and 1011–1066 (QVFT…LRID). Over residues 899 to 910 (SHPAQLKHKRDK) the composition is skewed to basic residues. A disordered region spans residues 899–928 (SHPAQLKHKRDKHKDGSGDRGEKDASKITT). Residues 911-924 (HKDGSGDRGEKDAS) are compositionally biased toward basic and acidic residues. Residues 1235 to 1386 (NRFESHGGGW…GQIPQLLYRL (152 aa)) form a PHR domain 1 region. Residue Ser-1621 is modified to Phosphoserine. The interval 1723–1881 (NRFTKTSQGR…GQIPQILYYR (159 aa)) is PHR domain 2. Cys-1745 and Cys-1860 form a disulfide bridge. An RAE1 binding region spans residues 2018–2544 (AVIESEHPYK…FNQHLGKSLL (527 aa)). Disordered stretches follow at residues 2313 to 2336 (KKTSLQQDQGKKCQRIPGSPSAAA) and 2780 to 3084 (QQRQ…KGDG). A Filamin repeat occupies 2331–2438 (SPSAAASSAD…IDAGLEVKVK (108 aa)). The span at 2780–2803 (QQRQLQSDRGTISTSSRPVSTSGK) shows a compositional bias: polar residues. Residues 2814–2832 (VKPDGHVSRTPADQKKPRG) are compositionally biased toward basic and acidic residues. At Ser-2841 the chain carries Phosphoserine. Positions 2847-2857 (DAAKLRSDSHS) are enriched in basic and acidic residues. A compositionally biased stretch (polar residues) spans 2858–2879 (RSLSPNHNTLQTLKSDGRTSSG). Phosphoserine is present on residues Ser-2859 and Ser-2861. Low complexity-rich tracts occupy residues 2884 to 2894 (SPGPGSRSSSP) and 2904 to 2917 (SSPSGASSPRSSSP). Phosphoserine is present on residues Ser-2905 and Ser-2911. Positions 2918-2929 (QDKNLPQKSTAP) are enriched in polar residues. Residues 2932-2943 (TKLDPPRERSKS) show a composition bias toward basic and acidic residues. A phosphoserine mark is found at Ser-2941, Ser-2943, and Ser-2992. A compositionally biased stretch (polar residues) spans 3008–3021 (CTSSTLKTNGVTDS). 2 stretches are compositionally biased toward basic and acidic residues: residues 3027–3037 (GDLKSVDEGSN) and 3047–3056 (PLKDEQEMRA). Phosphoserine is present on Ser-3057. The segment covering 3060–3073 (ISRKCANRHTRPKK) has biased composition (basic residues). 3 positions are modified to phosphoserine: Ser-3162, Ser-3550, and Ser-3577. The disordered stretch occupies residues 3677–3700 (VEAEEDEDEDNKSNKENAEQEKDT). Positions 3687–3700 (NKSNKENAEQEKDT) are enriched in basic and acidic residues. The region spanning 3789 to 3967 (FSISVQSGFE…SVAQQRSCEA (179 aa)) is the DOC domain. The segment at 3986–4007 (SGDAEPTPEQEEKALLSSPEGE) is disordered. Residue Thr-3992 is modified to Phosphothreonine. Ser-4002 and Ser-4003 each carry phosphoserine. Residues Cys-4499, Cys-4502, Cys-4517, His-4519, His-4522, Cys-4525, Cys-4546, Cys-4549, Cys-4615, and Cys-4618 each coordinate Zn(2+). The RING-type; atypical zinc-finger motif lies at 4499–4550 (CMICFTEALSAAPAIQLDCSHVFHLQCCRRVLENRWLGPRITFGFISCPICK). Residues 4610–4747 (YAYYVCYKCR…LGCGVCRNAH (138 aa)) form a tandem cysteine domain region. Cys-4629 is an active-site residue. Residues Cys-4646, Cys-4649, Cys-4658, His-4661, Cys-4670, Cys-4673, and Cys-4674 each coordinate Zn(2+). Cys-4681 is a catalytic residue. Zn(2+) contacts are provided by Cys-4688, Cys-4691, Cys-4709, Cys-4723, His-4729, Cys-4740, and Cys-4743.

The protein belongs to the RING-Cys relay (RCR) family. In terms of assembly, interacts with MYC. Interacts with TSC2 (tuberin) when TSC2 is in complex with TSC1 (hamartin). Interacts with FBXO45. Interacts with RAE1. Interacts with CPNE1 (via VWFA domain) and CPNE4 (via VWFA domain). Interacts with (sumoylated) RANGAP1; interaction with sumoylated RANGAP1 inhibits E3 ubiquitin-protein ligase activity and promotes MYCBP2 translocation to the nucleus. Interacts with RAN. Interacts with ATP13A2; the interaction inhibits the ubiquitination of TSC2 by MYCBP2. Interacts with USP11. Autoubiquitinated. Expression is mostly restricted to the nervous system, including expression in motor and sensory axons. During postnatal development, expression is particularly strong in the cerebellum, hippocampus and retina. Lower levels of expression are observed throughout the cerebral cortex.

The protein resides in the nucleus. The protein localises to the cell projection. Its subcellular location is the axon. It localises to the cytoplasm. It is found in the cytoskeleton. The enzyme catalyses [E2 ubiquitin-conjugating enzyme]-S-ubiquitinyl-L-cysteine + [acceptor protein]-L-threonine = [E2 ubiquitin-conjugating enzyme]-L-cysteine + [acceptor protein]-3-O-ubiquitinyl-L-threonine.. It functions in the pathway protein modification; protein ubiquitination. Functionally, atypical E3 ubiquitin-protein ligase which specifically mediates ubiquitination of threonine and serine residues on target proteins, instead of ubiquitinating lysine residues. Shows esterification activity towards both threonine and serine, with a preference for threonine, and acts via two essential catalytic cysteine residues that relay ubiquitin to its substrate via thioester intermediates. Interacts with the E2 enzymes UBE2D1, UBE2D3, UBE2E1 and UBE2L3. Plays a key role in neural development, probably by mediating ubiquitination of threonine residues on target proteins. Involved in different processes such as regulation of neurite outgrowth, synaptic growth, synaptogenesis and axon degeneration. Required for the formation of major central nervous system axon tracts. Required for proper axon growth by regulating axon navigation and axon branching: acts by regulating the subcellular location and stability of MAP3K12/DLK. Required for proper localization of retinogeniculate projections but not for eye-specific segregation. Regulates axon guidance in the olfactory system. Involved in Wallerian axon degeneration, an evolutionarily conserved process that drives the loss of damaged axons: acts by promoting destabilization of NMNAT2, probably via ubiquitination of NMNAT2. Catalyzes ubiquitination of threonine and/or serine residues on NMNAT2, consequences of threonine and/or serine ubiquitination are however unknown. Regulates the internalization of TRPV1 in peripheral sensory neurons. May mediate ubiquitination and subsequent proteasomal degradation of TSC2/tuberin. Independently of the E3 ubiquitin-protein ligase activity, also acts as a guanosine exchange factor (GEF) for RAN in neurons of dorsal root ganglia. May function as a facilitator or regulator of transcriptional activation by MYC. Acts in concert with HUWE1 to regulate the circadian clock gene expression by promoting the lithium-induced ubiquination and degradation of NR1D1. In Mus musculus (Mouse), this protein is E3 ubiquitin-protein ligase MYCBP2.